The primary structure comprises 180 residues: Segregation and condensation protein B (180 aa).

Belongs to the ScpB family. Homodimer. Homodimerization may be required to stabilize the binding of ScpA to the Smc head domains. Component of a cohesin-like complex composed of ScpA, ScpB and the Smc homodimer, in which ScpA and ScpB bind to the head domain of Smc. The presence of the three proteins is required for the association of the complex with DNA.

The protein resides in the cytoplasm. In terms of biological role, participates in chromosomal partition during cell division. May act via the formation of a condensin-like complex containing Smc and ScpA that pull DNA away from mid-cell into both cell halves. The protein is Segregation and condensation protein B of Staphylococcus aureus (strain Mu3 / ATCC 700698).